We begin with the raw amino-acid sequence, 186 residues long: Ribosome-recycling factor (186 aa).

The protein belongs to the RRF family.

The protein resides in the cytoplasm. Its function is as follows. Responsible for the release of ribosomes from messenger RNA at the termination of protein biosynthesis. May increase the efficiency of translation by recycling ribosomes from one round of translation to another. This is Ribosome-recycling factor from Burkholderia cenocepacia (strain HI2424).